A 155-amino-acid polypeptide reads, in one-letter code: Large ribosomal subunit protein eL24 (155 aa).

Residues 92 to 155 form a disordered region; it reads AKRNMKPEVR…KAAPRVGGKR (64 aa). Residues 96-117 show a composition bias toward basic and acidic residues; it reads MKPEVRKAQREQAIKQAKEQKK. Residues 124 to 133 show a composition bias toward low complexity; it reads KTTAPPTKGK.

This sequence belongs to the eukaryotic ribosomal protein eL24 family.

The polypeptide is Large ribosomal subunit protein eL24 (RpL24) (Plutella xylostella (Diamondback moth)).